The chain runs to 173 residues: Coordinator of PRMT5 and differentiation stimulator (173 aa).

An N-acetylmethionine modification is found at methionine 1. The tract at residues 1–70 (MDPQAATGRG…EGPSSEEEGF (70 aa)) is disordered. Serine 64 and serine 65 each carry phosphoserine.

As to quaternary structure, interacts with PRMT5. Interacts with histone H4; specifically interacts with the N-terminus of histone H4 but not with histone H3. Interacts with CBFB. Found in a complex with PRMT5, RUNX1 and CBFB.

Its subcellular location is the nucleus. Histone-binding protein required for histone H4 methyltransferase activity of PRMT5. Specifically required for histone H4 'Arg-3' methylation mediated by PRMT5, but not histone H3 'Arg-8' methylation, suggesting that it modulates the substrate specificity of PRMT5. Specifically interacts with the N-terminus of histone H4 but not with histone H3, suggesting that it acts by promoting the association between histone H4 and PRMT5. Involved in CCNE1 promoter repression. Plays a role in muscle cell differentiation by modulating the recruitment of PRMT5 to the promoter of genes involved in the coordination between cell cycle exit and muscle differentiation. In Mus musculus (Mouse), this protein is Coordinator of PRMT5 and differentiation stimulator (Coprs).